Consider the following 907-residue polypeptide: CRM-domain containing factor CFM3B, chloroplastic (907 aa).

Residues 1-59 (MAINSSHHFCPMTTTTTTSAKFVDSLGSSFCKFHGTSSSISLRSYRFGFSFMKNVKRLS) constitute a chloroplast transit peptide. Disordered regions lie at residues 62-89 (GSSS…SKVV) and 101-123 (LGVI…GSSS). Residues 70 to 84 (RNENWNRTQKQNQFR) show a composition bias toward polar residues. 2 consecutive CRM domains span residues 220 to 316 (MTLS…DGSG) and 421 to 518 (STLG…EVGE). Residues 621–654 (SAKLVRKLERKLAFAEKKLLKAERALAKVEESLK) are a coiled coil. The 101-residue stretch at 663–763 (EGITEEERFM…KDYKRPTTLR (101 aa)) folds into the CRM 3 domain. The tract at residues 824–907 (MAYSSDEETE…LQNEELDVQP (84 aa)) is disordered. Acidic residues-rich tracts occupy residues 828–857 (SDEE…DEEG) and 868–881 (TDVE…DTDF). Positions 882 to 897 (GDNSASSTTPETTFVE) are enriched in polar residues.

As to quaternary structure, interacts with RNA. Part of large ribonucleo-protein particles that contain CAF1 and/or CAF2, and RNC1. Interacts with RFC3 in plastids. In terms of tissue distribution, expressed at low levels in roots and shoots.

It is found in the plastid. The protein resides in the chloroplast. In terms of biological role, binds specific group II introns in chloroplasts and facilitates their splicing. Exhibits non-specific action during plastid rRNA biogenesis; RFC3 prevents unaccurate splicing to improve the accuracy of plastid rRNA processing. Acts on subgroup IIB introns. The substrates of the subgroup IIB also require the CRM domain proteins CAF1 or CAF2, with a simultaneous binding of CFM3B and CAF1 or CAF2. Required for seed development. This chain is CRM-domain containing factor CFM3B, chloroplastic, found in Arabidopsis thaliana (Mouse-ear cress).